The primary structure comprises 142 residues: Large ribosomal subunit protein uL13 (142 aa).

This sequence belongs to the universal ribosomal protein uL13 family. As to quaternary structure, part of the 50S ribosomal subunit.

This protein is one of the early assembly proteins of the 50S ribosomal subunit, although it is not seen to bind rRNA by itself. It is important during the early stages of 50S assembly. The protein is Large ribosomal subunit protein uL13 of Sodalis glossinidius (strain morsitans).